We begin with the raw amino-acid sequence, 879 residues long: Paramyosin, long form (879 aa).

Residues 1–31 form a nonhelical region region; sequence MSSSQAVRSSKYSYRATSTGPGTADVNIEYI. The residue at position 18 (Ser-18) is a Phosphoserine. A coiled-coil region spans residues 32 to 858; sequence QDLSSLSRLE…IIRAKHRTFV (827 aa). Residues 859 to 879 form a nonhelical region region; that stretch reads TTSTVPGSQVYIQETTRTITE.

It belongs to the paramyosin family. As to quaternary structure, heterodimer of two isoforms. In terms of processing, the more-acidic and less-abundant isoform is phosphorylated. As to expression, expressed in all larval and adult muscle tissues. Expression is five times higher in tubular than in fibrillar muscles.

It is found in the cytoplasm. The protein resides in the myofibril. Paramyosin is a major structural component of many thick filaments isolated from invertebrate muscles. In Drosophila melanogaster (Fruit fly), this protein is Paramyosin, long form (Prm).